The chain runs to 295 residues: MGFVKVVKNKAYFKRYQVKYKRRRQGKTDYFARKRLVVQDKNKYNTPKYRMIVRFTNKDIVCQIAYARIEGDVVICAAYAHELPRYGVKVGLTNYAAAYCTGLLLSRRLLNKFGLDEIYEGQTEIDGDEFYVEDVDGKPGAFRAFLDVGLARTTTGAKVFGAMKGAADGGLDIPHSTKRFPGYDDESGDFSAEVHRSHIFGGHVSNYMKELEEEDEEAFKRQFSQYIKHGVTADTVEEMYTKAHAAIREDPTPKKKTDFAGKTKRWNRKKMTFSQRRDRVKQKKASFLRAKQQEG.

Residues 251–261 (PTPKKKTDFAG) show a composition bias toward basic and acidic residues. Residues 251-295 (PTPKKKTDFAGKTKRWNRKKMTFSQRRDRVKQKKASFLRAKQQEG) form a disordered region. Basic residues predominate over residues 262 to 271 (KTKRWNRKKM).

Belongs to the universal ribosomal protein uL18 family. Component of the large ribosomal subunit (LSU).

It localises to the cytoplasm. The protein localises to the nucleus. Its function is as follows. Component of the ribosome, a large ribonucleoprotein complex responsible for the synthesis of proteins in the cell. The small ribosomal subunit (SSU) binds messenger RNAs (mRNAs) and translates the encoded message by selecting cognate aminoacyl-transfer RNA (tRNA) molecules. The large subunit (LSU) contains the ribosomal catalytic site termed the peptidyl transferase center (PTC), which catalyzes the formation of peptide bonds, thereby polymerizing the amino acids delivered by tRNAs into a polypeptide chain. The nascent polypeptides leave the ribosome through a tunnel in the LSU and interact with protein factors that function in enzymatic processing, targeting, and the membrane insertion of nascent chains at the exit of the ribosomal tunnel. This chain is Large ribosomal subunit protein uL18 (RPL5), found in Styela clava (Sea squirt).